The sequence spans 555 residues: CTP synthase (555 aa).

The tract at residues 1-271 is amidoligase domain; that stretch reads MVKRGKKTKY…DDKLAELFNI (271 aa). Serine 19 serves as a coordination point for CTP. Serine 19 is a UTP binding site. ATP contacts are provided by residues 20 to 25 and aspartate 77; that span reads SLGKGL. The Mg(2+) site is built by aspartate 77 and glutamate 145. CTP is bound by residues 152-154, 192-197, and lysine 228; these read DIE and KTKPTQ. Residues 192–197 and lysine 228 each bind UTP; that span reads KTKPTQ. The 241-residue stretch at 297-537 folds into the Glutamine amidotransferase type-1 domain; the sequence is RIGIVGKYVE…VKAALEHRDA (241 aa). Glycine 358 provides a ligand contact to L-glutamine. The active-site Nucleophile; for glutamine hydrolysis is the cysteine 385. L-glutamine is bound by residues 386-389, glutamate 409, and arginine 466; that span reads LGLQ. Active-site residues include histidine 510 and glutamate 512. The segment at 536-555 is disordered; sequence DAQQRQPSAEVKKLPVGKNG.

It belongs to the CTP synthase family. Homotetramer.

The catalysed reaction is UTP + L-glutamine + ATP + H2O = CTP + L-glutamate + ADP + phosphate + 2 H(+). The enzyme catalyses L-glutamine + H2O = L-glutamate + NH4(+). It carries out the reaction UTP + NH4(+) + ATP = CTP + ADP + phosphate + 2 H(+). The protein operates within pyrimidine metabolism; CTP biosynthesis via de novo pathway; CTP from UDP: step 2/2. Its activity is regulated as follows. Allosterically activated by GTP, when glutamine is the substrate; GTP has no effect on the reaction when ammonia is the substrate. The allosteric effector GTP functions by stabilizing the protein conformation that binds the tetrahedral intermediate(s) formed during glutamine hydrolysis. Inhibited by the product CTP, via allosteric rather than competitive inhibition. Functionally, catalyzes the ATP-dependent amination of UTP to CTP with either L-glutamine or ammonia as the source of nitrogen. Regulates intracellular CTP levels through interactions with the four ribonucleotide triphosphates. The protein is CTP synthase of Anaeromyxobacter dehalogenans (strain 2CP-C).